A 274-amino-acid chain; its full sequence is 23S rRNA (adenosine(1067)-2'-O)-methyltransferase (274 aa).

S-adenosyl-L-methionine-binding positions include Arg165, Leu195, 218–220, 238–240, and 247–252; these read GSE, IPM, and LNVSVS.

It belongs to the class IV-like SAM-binding methyltransferase superfamily. RNA methyltransferase TsnR/AvirB family. As to quaternary structure, homodimer.

The catalysed reaction is adenosine(1067) in 23S rRNA + S-adenosyl-L-methionine = 2'-O-methyladenosine(1067) in 23S rRNA + S-adenosyl-L-homocysteine + H(+). Functionally, specifically methylates the adenosine-1067 in 23S ribosomal RNA. Confers resistance to antibiotic nosiheptide. The polypeptide is 23S rRNA (adenosine(1067)-2'-O)-methyltransferase (Streptomyces actuosus).